The sequence spans 328 residues: Tetraacyldisaccharide 4'-kinase (328 aa).

55–62 (TAGGNGKT) serves as a coordination point for ATP.

It belongs to the LpxK family.

The catalysed reaction is a lipid A disaccharide + ATP = a lipid IVA + ADP + H(+). The protein operates within glycolipid biosynthesis; lipid IV(A) biosynthesis; lipid IV(A) from (3R)-3-hydroxytetradecanoyl-[acyl-carrier-protein] and UDP-N-acetyl-alpha-D-glucosamine: step 6/6. Its function is as follows. Transfers the gamma-phosphate of ATP to the 4'-position of a tetraacyldisaccharide 1-phosphate intermediate (termed DS-1-P) to form tetraacyldisaccharide 1,4'-bis-phosphate (lipid IVA). The sequence is that of Tetraacyldisaccharide 4'-kinase from Escherichia coli (strain 55989 / EAEC).